The sequence spans 161 residues: MSVTLHTTSGDIKIELYVDDAPKACENFLALCASDYYNGCIFHRNIKDFMVQTGDPTHSGKGGESIWGGPFEDEFVSALKHDSRGCVSMANNGPDSNRSQFFITYAKQAHLDMKYTLFGKVIDGFDTLEEIETIKVDNKYRPLVQQKIQNVTIHANPMAAD.

One can recognise a PPIase cyclophilin-type domain in the interval 1-153 (MSVTLHTTSG…VQQKIQNVTI (153 aa)).

Belongs to the cyclophilin-type PPIase family. PPIL3 subfamily.

The catalysed reaction is [protein]-peptidylproline (omega=180) = [protein]-peptidylproline (omega=0). Its function is as follows. PPIases accelerate the folding of proteins. It catalyzes the cis-trans isomerization of proline imidic peptide bonds in oligopeptides. The protein is Peptidyl-prolyl cis-trans isomerase 10 (cyn-10) of Caenorhabditis elegans.